The primary structure comprises 55 residues: Large ribosomal subunit protein bL33m (55 aa).

Belongs to the bacterial ribosomal protein bL33 family. In terms of assembly, component of the mitochondrial large ribosomal subunit (mt-LSU). Mature yeast 74S mitochondrial ribosomes consist of a small (37S) and a large (54S) subunit. The 37S small subunit contains a 15S ribosomal RNA (15S mt-rRNA) and at least 32 different proteins. The 54S large subunit contains a 21S rRNA (21S mt-rRNA) and at least 45 different proteins. bL33m stabilizes the tRNA acceptor stem in the E-site.

Its subcellular location is the mitochondrion. Its function is as follows. Component of the mitochondrial ribosome (mitoribosome), a dedicated translation machinery responsible for the synthesis of mitochondrial genome-encoded proteins, including at least some of the essential transmembrane subunits of the mitochondrial respiratory chain. The mitoribosomes are attached to the mitochondrial inner membrane and translation products are cotranslationally integrated into the membrane. This is Large ribosomal subunit protein bL33m (mrpl39) from Schizosaccharomyces pombe (strain 972 / ATCC 24843) (Fission yeast).